The chain runs to 192 residues: Vascular endothelial growth factor A (192 aa).

Residues 1-26 form the signal peptide; that stretch reads MNFLLTWIHWGLAALLYFHNAKVLQA. Cystine bridges form between C52–C94, C83–C128, and C87–C130. N101 carries an N-linked (GlcNAc...) asparagine glycan.

It belongs to the PDGF/VEGF growth factor family. As to quaternary structure, homodimer; disulfide-linked. Also found as heterodimer with PGF. Interacts with FLT1/VEGFR1 and KDR/VEGFR2 receptors, heparan sulfate and heparin. As to expression, expressed by the venom gland, and probably other tissues.

The protein localises to the secreted. Its function is as follows. Growth factor active in angiogenesis, vasculogenesis and endothelial cell growth. Induces endothelial cell proliferation, promotes cell migration, inhibits apoptosis and induces permeabilization of blood vessels. This chain is Vascular endothelial growth factor A, found in Agkistrodon piscivorus piscivorus (Eastern cottonmouth).